A 527-amino-acid polypeptide reads, in one-letter code: Catalase (527 aa).

Residues 1–22 are compositionally biased toward basic and acidic residues; that stretch reads MADNRDPASDQMKHWKEQRAAQ. The disordered stretch occupies residues 1–32; sequence MADNRDPASDQMKHWKEQRAAQKPDILTTGSG. A2 carries the N-acetylalanine modification. S9 bears the Phosphoserine mark. An N6-succinyllysine modification is found at K13. Residues H75 and N148 contribute to the active site. Residues H194, S201, R203, and N213 each contribute to the NADP(+) site. K221 carries the post-translational modification N6-succinyllysine. At K233 the chain carries N6-acetyllysine. NADP(+) is bound by residues K237, W303, and H305. Y358 lines the heme pocket. Residues S417 and S434 each carry the phosphoserine modification. K480 carries the N6-acetyllysine; alternate modification. K480 bears the N6-succinyllysine; alternate mark. The residue at position 499 (K499) is an N6-acetyllysine. Position 511 is a phosphothreonine (T511). Residue S517 is modified to Phosphoserine. The short motif at 524–527 is the Microbody targeting signal; atypical element; sequence KANL.

Belongs to the catalase family. In terms of assembly, homotetramer. Interacts (via microbody targeting signal) with PEX5, monomeric form interacts with PEX5, leading to its translocation into peroxisomes. Heme is required as a cofactor. It depends on NADP(+) as a cofactor.

Its subcellular location is the peroxisome matrix. It carries out the reaction 2 H2O2 = O2 + 2 H2O. Functionally, catalyzes the degradation of hydrogen peroxide (H(2)O(2)) generated by peroxisomal oxidases to water and oxygen, thereby protecting cells from the toxic effects of hydrogen peroxide. Promotes growth of cells including T-cells, B-cells, myeloid leukemia cells, melanoma cells, mastocytoma cells and normal and transformed fibroblast cells. The sequence is that of Catalase (CAT) from Sus scrofa (Pig).